We begin with the raw amino-acid sequence, 348 residues long: Ribonuclease H (348 aa).

Over residues 54 to 65 (NTTSNYGSSTHA) the composition is skewed to polar residues. Residues 54 to 81 (NTTSNYGSSTHAGGQVSKPHTTQKRVHR) are disordered. The region spanning 184 to 346 (YNKSMNVYCD…ADFLAKKGAS (163 aa)) is the RNase H type-1 domain. 4 residues coordinate Mg(2+): Asp193, Glu235, Asp264, and Asp338.

It belongs to the RNase H family. Requires Mg(2+) as cofactor.

It carries out the reaction Endonucleolytic cleavage to 5'-phosphomonoester.. Functionally, endonuclease that specifically degrades the RNA of RNA-DNA hybrids. The chain is Ribonuclease H (RNH1) from Saccharomyces cerevisiae (strain ATCC 204508 / S288c) (Baker's yeast).